A 339-amino-acid polypeptide reads, in one-letter code: Centrosomal protein of 41 kDa (339 aa).

The interval 56–99 is disordered; sequence RLEDSDSATSEADTDIAAKTNGKGSPEEQSPSPVQFINSTGAGD. Phosphoserine is present on residues Ser-62 and Ser-65. Over residues 62-73 the composition is skewed to low complexity; the sequence is SATSEADTDIAA. At Thr-75 the chain carries Phosphothreonine. Phosphoserine occurs at positions 80 and 87. Positions 82–99 are enriched in polar residues; sequence EEQSPSPVQFINSTGAGD. The Rhodanese domain occupies 135 to 232; that stretch reads PDCPFLLLDV…LAQKFPEGLV (98 aa). Positions 283–339 are disordered; it reads DQGPANNPSRLNQNNSAGRDLKVPAGRGGQNLPTGCPTSHSNSRTLNSGHLQGKPWK. The segment covering 286 to 299 has biased composition (polar residues); it reads PANNPSRLNQNNSA. Position 309 is an omega-N-methylarginine (Arg-309). Over residues 313 to 332 the composition is skewed to polar residues; the sequence is NLPTGCPTSHSNSRTLNSGH.

It belongs to the CEP41 family. In terms of assembly, found in a complex with TTLL6.

Its subcellular location is the cytoplasm. The protein localises to the cytoskeleton. The protein resides in the microtubule organizing center. It localises to the centrosome. It is found in the cell projection. Its subcellular location is the cilium. The protein localises to the cilium basal body. Required during ciliogenesis for tubulin glutamylation in cilium. Probably acts by participating in the transport of TTLL6, a tubulin polyglutamylase, between the basal body and the cilium. This Rattus norvegicus (Rat) protein is Centrosomal protein of 41 kDa (Cep41).